A 224-amino-acid polypeptide reads, in one-letter code: Glutathione S-transferase U1 (224 aa).

One can recognise a GST N-terminal domain in the interval 6–85; sequence ESVKLLGFWA…YIDQTWKNSP (80 aa). Residues 16–17, 42–43, 56–57, and 69–70 contribute to the glutathione site; these read SP, NK, KV, and ES. A GST C-terminal domain is found at 90–217; it reads DPYEKAMARF…EKQIERMTKI (128 aa). Residue threonine 151 is modified to Phosphothreonine.

It belongs to the GST superfamily. Tau family.

The protein resides in the cytoplasm. It localises to the cytosol. The catalysed reaction is RX + glutathione = an S-substituted glutathione + a halide anion + H(+). Functionally, may be involved in the conjugation of reduced glutathione to a wide number of exogenous and endogenous hydrophobic electrophiles and have a detoxification role against certain herbicides. The sequence is that of Glutathione S-transferase U1 (GSTU1) from Arabidopsis thaliana (Mouse-ear cress).